Here is a 496-residue protein sequence, read N- to C-terminus: 3-octaprenyl-4-hydroxybenzoate carboxy-lyase (496 aa).

Mn(2+) is bound at residue Asn-181. Residues 184-186 (IYR), 198-200 (RWL), and 203-204 (RG) each bind prenylated FMN. Mn(2+) is bound at residue Glu-247. Catalysis depends on Asp-296, which acts as the Proton donor.

The protein belongs to the UbiD family. In terms of assembly, homohexamer. The cofactor is prenylated FMN. Mn(2+) is required as a cofactor.

Its subcellular location is the cell membrane. It catalyses the reaction a 4-hydroxy-3-(all-trans-polyprenyl)benzoate + H(+) = a 2-(all-trans-polyprenyl)phenol + CO2. The protein operates within cofactor biosynthesis; ubiquinone biosynthesis. Catalyzes the decarboxylation of 3-octaprenyl-4-hydroxy benzoate to 2-octaprenylphenol, an intermediate step in ubiquinone biosynthesis. This is 3-octaprenyl-4-hydroxybenzoate carboxy-lyase from Aromatoleum aromaticum (strain DSM 19018 / LMG 30748 / EbN1) (Azoarcus sp. (strain EbN1)).